The sequence spans 345 residues: Probable dual-specificity RNA methyltransferase RlmN (345 aa).

Glu98 acts as the Proton acceptor in catalysis. The Radical SAM core domain maps to 104–332 (TYKRLTVCVS…VSIRYSRGLE (229 aa)). A disulfide bond links Cys111 and Cys337. 3 residues coordinate [4Fe-4S] cluster: Cys118, Cys122, and Cys125. S-adenosyl-L-methionine contacts are provided by residues 165 to 166 (GE), Ser195, 218 to 220 (SLH), and Asn294. Catalysis depends on Cys337, which acts as the S-methylcysteine intermediate.

Belongs to the radical SAM superfamily. RlmN family. [4Fe-4S] cluster serves as cofactor.

Its subcellular location is the cytoplasm. It catalyses the reaction adenosine(2503) in 23S rRNA + 2 reduced [2Fe-2S]-[ferredoxin] + 2 S-adenosyl-L-methionine = 2-methyladenosine(2503) in 23S rRNA + 5'-deoxyadenosine + L-methionine + 2 oxidized [2Fe-2S]-[ferredoxin] + S-adenosyl-L-homocysteine. It carries out the reaction adenosine(37) in tRNA + 2 reduced [2Fe-2S]-[ferredoxin] + 2 S-adenosyl-L-methionine = 2-methyladenosine(37) in tRNA + 5'-deoxyadenosine + L-methionine + 2 oxidized [2Fe-2S]-[ferredoxin] + S-adenosyl-L-homocysteine. In terms of biological role, specifically methylates position 2 of adenine 2503 in 23S rRNA and position 2 of adenine 37 in tRNAs. This is Probable dual-specificity RNA methyltransferase RlmN from Trichodesmium erythraeum (strain IMS101).